A 405-amino-acid polypeptide reads, in one-letter code: Coenzyme F420 hydrogenase subunit alpha (405 aa).

4 residues coordinate Ni(2+): cysteine 63, cysteine 66, cysteine 380, and cysteine 383.

It belongs to the [NiFe]/[NiFeSe] hydrogenase large subunit family. Heterocomplex of the form (alpha(1)beta(1)gamma(1))(8). Requires Ni(2+) as cofactor. Iron-sulfur cluster is required as a cofactor. FAD serves as cofactor.

It carries out the reaction oxidized coenzyme F420-(gamma-L-Glu)(n) + H2 + H(+) = reduced coenzyme F420-(gamma-L-Glu)(n). Functionally, reduces the physiological low-potential two-electron acceptor coenzyme F420, and the artificial one-electron acceptor methylviologen. The sequence is that of Coenzyme F420 hydrogenase subunit alpha (frhA) from Methanothermobacter thermautotrophicus (strain ATCC 29096 / DSM 1053 / JCM 10044 / NBRC 100330 / Delta H) (Methanobacterium thermoautotrophicum).